Here is a 504-residue protein sequence, read N- to C-terminus: ATP synthase subunit alpha (504 aa).

Glycine 170–threonine 177 provides a ligand contact to ATP.

This sequence belongs to the ATPase alpha/beta chains family. In terms of assembly, F-type ATPases have 2 components, CF(1) - the catalytic core - and CF(0) - the membrane proton channel. CF(1) has five subunits: alpha(3), beta(3), gamma(1), delta(1), epsilon(1). CF(0) has three main subunits: a(1), b(2) and c(9-12). The alpha and beta chains form an alternating ring which encloses part of the gamma chain. CF(1) is attached to CF(0) by a central stalk formed by the gamma and epsilon chains, while a peripheral stalk is formed by the delta and b chains.

It localises to the cell membrane. It carries out the reaction ATP + H2O + 4 H(+)(in) = ADP + phosphate + 5 H(+)(out). Functionally, produces ATP from ADP in the presence of a proton gradient across the membrane. The alpha chain is a regulatory subunit. The sequence is that of ATP synthase subunit alpha from Shouchella clausii (strain KSM-K16) (Alkalihalobacillus clausii).